The following is a 425-amino-acid chain: Glutamyl-tRNA reductase (425 aa).

Substrate contacts are provided by residues threonine 49–arginine 52, serine 109, glutamate 114–glutamine 116, and glutamine 120. Residue cysteine 50 is the Nucleophile of the active site. NADP(+) is bound at residue glycine 189–glycine 194.

The protein belongs to the glutamyl-tRNA reductase family. As to quaternary structure, homodimer.

It carries out the reaction (S)-4-amino-5-oxopentanoate + tRNA(Glu) + NADP(+) = L-glutamyl-tRNA(Glu) + NADPH + H(+). The protein operates within porphyrin-containing compound metabolism; protoporphyrin-IX biosynthesis; 5-aminolevulinate from L-glutamyl-tRNA(Glu): step 1/2. Its pathway is porphyrin-containing compound metabolism; chlorophyll biosynthesis. Its function is as follows. Catalyzes the NADPH-dependent reduction of glutamyl-tRNA(Glu) to glutamate 1-semialdehyde (GSA). The sequence is that of Glutamyl-tRNA reductase from Chlorobium phaeobacteroides (strain DSM 266 / SMG 266 / 2430).